Reading from the N-terminus, the 234-residue chain is Leucyl/phenylalanyl-tRNA--protein transferase (234 aa).

This sequence belongs to the L/F-transferase family.

It localises to the cytoplasm. It carries out the reaction N-terminal L-lysyl-[protein] + L-leucyl-tRNA(Leu) = N-terminal L-leucyl-L-lysyl-[protein] + tRNA(Leu) + H(+). The enzyme catalyses N-terminal L-arginyl-[protein] + L-leucyl-tRNA(Leu) = N-terminal L-leucyl-L-arginyl-[protein] + tRNA(Leu) + H(+). It catalyses the reaction L-phenylalanyl-tRNA(Phe) + an N-terminal L-alpha-aminoacyl-[protein] = an N-terminal L-phenylalanyl-L-alpha-aminoacyl-[protein] + tRNA(Phe). Its function is as follows. Functions in the N-end rule pathway of protein degradation where it conjugates Leu, Phe and, less efficiently, Met from aminoacyl-tRNAs to the N-termini of proteins containing an N-terminal arginine or lysine. This Shigella flexneri serotype 5b (strain 8401) protein is Leucyl/phenylalanyl-tRNA--protein transferase.